Consider the following 119-residue polypeptide: Aspartate 1-decarboxylase (119 aa).

Ser-25 serves as the catalytic Schiff-base intermediate with substrate; via pyruvic acid. Position 25 is a pyruvic acid (Ser) (Ser-25). Thr-57 contributes to the substrate binding site. Tyr-58 (proton donor) is an active-site residue. Position 73–75 (73–75 (GAA)) interacts with substrate.

This sequence belongs to the PanD family. Heterooctamer of four alpha and four beta subunits. Pyruvate is required as a cofactor. Post-translationally, is synthesized initially as an inactive proenzyme, which is activated by self-cleavage at a specific serine bond to produce a beta-subunit with a hydroxyl group at its C-terminus and an alpha-subunit with a pyruvoyl group at its N-terminus.

The protein localises to the cytoplasm. The catalysed reaction is L-aspartate + H(+) = beta-alanine + CO2. It functions in the pathway cofactor biosynthesis; (R)-pantothenate biosynthesis; beta-alanine from L-aspartate: step 1/1. Functionally, catalyzes the pyruvoyl-dependent decarboxylation of aspartate to produce beta-alanine. The sequence is that of Aspartate 1-decarboxylase from Herminiimonas arsenicoxydans.